Consider the following 434-residue polypeptide: Enolase (434 aa).

Residues His158 and Glu167 each contribute to the substrate site. The Proton donor role is filled by Glu210. Mg(2+) is bound by residues Asp245, Glu294, and Asp319. The substrate site is built by Glu294 and Asp319. Catalysis depends on Lys344, which acts as the Proton acceptor. Substrate contacts are provided by residues 371 to 374 (SHRS) and Lys395.

Belongs to the enolase family. As to quaternary structure, homodimer. Mg(2+) is required as a cofactor.

Its subcellular location is the cytoplasm. The enzyme catalyses (2R)-2-phosphoglycerate = phosphoenolpyruvate + H2O. Its pathway is carbohydrate degradation; glycolysis; pyruvate from D-glyceraldehyde 3-phosphate: step 4/5. The protein is Enolase (ENO) of Schistosoma japonicum (Blood fluke).